The sequence spans 347 residues: UDP-3-O-acylglucosamine N-acyltransferase (347 aa).

His-241 acts as the Proton acceptor in catalysis.

It belongs to the transferase hexapeptide repeat family. LpxD subfamily. Homotrimer.

The enzyme catalyses a UDP-3-O-[(3R)-3-hydroxyacyl]-alpha-D-glucosamine + a (3R)-hydroxyacyl-[ACP] = a UDP-2-N,3-O-bis[(3R)-3-hydroxyacyl]-alpha-D-glucosamine + holo-[ACP] + H(+). Its pathway is bacterial outer membrane biogenesis; LPS lipid A biosynthesis. In terms of biological role, catalyzes the N-acylation of UDP-3-O-acylglucosamine using 3-hydroxyacyl-ACP as the acyl donor. Is involved in the biosynthesis of lipid A, a phosphorylated glycolipid that anchors the lipopolysaccharide to the outer membrane of the cell. This is UDP-3-O-acylglucosamine N-acyltransferase from Nitrosococcus oceani (strain ATCC 19707 / BCRC 17464 / JCM 30415 / NCIMB 11848 / C-107).